The primary structure comprises 110 residues: Large ribosomal subunit protein uL22 (110 aa).

Belongs to the universal ribosomal protein uL22 family. As to quaternary structure, part of the 50S ribosomal subunit.

This protein binds specifically to 23S rRNA; its binding is stimulated by other ribosomal proteins, e.g. L4, L17, and L20. It is important during the early stages of 50S assembly. It makes multiple contacts with different domains of the 23S rRNA in the assembled 50S subunit and ribosome. In terms of biological role, the globular domain of the protein is located near the polypeptide exit tunnel on the outside of the subunit, while an extended beta-hairpin is found that lines the wall of the exit tunnel in the center of the 70S ribosome. This chain is Large ribosomal subunit protein uL22, found in Mannheimia succiniciproducens (strain KCTC 0769BP / MBEL55E).